We begin with the raw amino-acid sequence, 133 residues long: Triatox (133 aa).

A signal peptide spans 1 to 22; that stretch reads MTTLRVLLAVCCAAYCILAEDV. The region spanning 23 to 125 is the CUB domain; that stretch reads TVPANGELKL…RAMCTVYSAE (103 aa). C70 and C86 form a disulfide bridge.

This sequence belongs to the venom CUB family. Expressed by the venom gland.

It is found in the secreted. Its function is as follows. May function as an antimicrobial peptide and may be related to the innate defense of the insect in the salivary glands. In Triatoma infestans (Assassin bug), this protein is Triatox.